A 186-amino-acid chain; its full sequence is Ribosome-recycling factor (186 aa).

This sequence belongs to the RRF family.

The protein resides in the cytoplasm. Its function is as follows. Responsible for the release of ribosomes from messenger RNA at the termination of protein biosynthesis. May increase the efficiency of translation by recycling ribosomes from one round of translation to another. The chain is Ribosome-recycling factor from Porphyromonas gingivalis (strain ATCC BAA-308 / W83).